The primary structure comprises 293 residues: Putative immediate early glycoprotein (293 aa).

The signal sequence occupies residues Met1–Thr21. N-linked (GlcNAc...) asparagine; by host glycosylation is found at Asn23, Asn55, Asn83, Asn120, Asn150, Asn156, Asn168, Asn212, and Asn249. Residues Leu262 to Ile282 traverse the membrane as a helical segment.

The protein belongs to the herpesviridae immediate early glycoprotein family.

It localises to the membrane. The polypeptide is Putative immediate early glycoprotein (U18) (Human herpesvirus 6A (strain Uganda-1102) (HHV-6 variant A)).